Consider the following 72-residue polypeptide: Translation initiation factor IF-1 (72 aa).

One can recognise an S1-like domain in the interval Met-1–Lys-72.

Belongs to the IF-1 family. Component of the 30S ribosomal translation pre-initiation complex which assembles on the 30S ribosome in the order IF-2 and IF-3, IF-1 and N-formylmethionyl-tRNA(fMet); mRNA recruitment can occur at any time during PIC assembly.

It is found in the cytoplasm. One of the essential components for the initiation of protein synthesis. Stabilizes the binding of IF-2 and IF-3 on the 30S subunit to which N-formylmethionyl-tRNA(fMet) subsequently binds. Helps modulate mRNA selection, yielding the 30S pre-initiation complex (PIC). Upon addition of the 50S ribosomal subunit IF-1, IF-2 and IF-3 are released leaving the mature 70S translation initiation complex. The sequence is that of Translation initiation factor IF-1 from Parabacteroides distasonis (strain ATCC 8503 / DSM 20701 / CIP 104284 / JCM 5825 / NCTC 11152).